The following is a 321-amino-acid chain: Probable protein phosphatase 2C 44 (321 aa).

Disordered stretches follow at residues 1–36 (MVGRMERQSASSSASCSPSSSAAGTSSSSSACGGKK) and 51–70 (NSSSTDTGKGRSKQSSNKVT). Residues 9-31 (SASSSASCSPSSSAAGTSSSSSA) are compositionally biased toward low complexity. Positions 51-69 (NSSSTDTGKGRSKQSSNKV) are enriched in polar residues. Positions 70 to 319 (THGFHLVEGK…DDISCIVIRF (250 aa)) constitute a PPM-type phosphatase domain. Residues Asp-107, Gly-108, Asp-271, and Asp-310 each coordinate Mn(2+).

It belongs to the PP2C family. Mg(2+) is required as a cofactor. The cofactor is Mn(2+).

It carries out the reaction O-phospho-L-seryl-[protein] + H2O = L-seryl-[protein] + phosphate. It catalyses the reaction O-phospho-L-threonyl-[protein] + H2O = L-threonyl-[protein] + phosphate. The protein is Probable protein phosphatase 2C 44 of Oryza sativa subsp. japonica (Rice).